Reading from the N-terminus, the 209-residue chain is 2,3-bisphosphoglycerate-dependent phosphoglycerate mutase (209 aa).

Residues 8–15, 21–22, arginine 60, 87–90, lysine 98, 114–115, and 158–159 each bind substrate; these read RHGQSEGN, TG, ERDY, RR, and GN. Histidine 9 (tele-phosphohistidine intermediate) is an active-site residue. The active-site Proton donor/acceptor is the glutamate 87.

Belongs to the phosphoglycerate mutase family. BPG-dependent PGAM subfamily. In terms of assembly, homodimer.

It catalyses the reaction (2R)-2-phosphoglycerate = (2R)-3-phosphoglycerate. It participates in carbohydrate degradation; glycolysis; pyruvate from D-glyceraldehyde 3-phosphate: step 3/5. In terms of biological role, catalyzes the interconversion of 2-phosphoglycerate and 3-phosphoglycerate. This chain is 2,3-bisphosphoglycerate-dependent phosphoglycerate mutase, found in Rhizobium etli (strain ATCC 51251 / DSM 11541 / JCM 21823 / NBRC 15573 / CFN 42).